The chain runs to 546 residues: Beta-amylase (546 aa).

The signal sequence occupies residues 1–30; the sequence is MKNQFQYCCIVILSVVMLFVSLLIPQASSA. D79 serves as a coordination point for substrate. 3 residues coordinate Ca(2+): E86, D90, and Q91. Substrate is bound by residues H119 and D127. C121 and C129 form a disulfide bridge. Residues E171 and E174 each coordinate Ca(2+). The active-site Proton donor is E202. Substrate contacts are provided by K317, H322, and T360. E397 acts as the Proton acceptor in catalysis. Substrate-binding positions include 398-399 and R427; that span reads NA. Positions 444–546 constitute a CBM20 domain; sequence LLGVTPVMQT…LKTTSHTSSW (103 aa).

Belongs to the glycosyl hydrolase 14 family. Monomer. The cofactor is Ca(2+).

It carries out the reaction Hydrolysis of (1-&gt;4)-alpha-D-glucosidic linkages in polysaccharides so as to remove successive maltose units from the non-reducing ends of the chains.. The protein is Beta-amylase (spoII) of Bacillus cereus.